The sequence spans 288 residues: Homoserine kinase (288 aa).

79–89 (PPARGLGSSSA) contributes to the ATP binding site.

It belongs to the GHMP kinase family. Homoserine kinase subfamily.

It localises to the cytoplasm. It catalyses the reaction L-homoserine + ATP = O-phospho-L-homoserine + ADP + H(+). Its pathway is amino-acid biosynthesis; L-threonine biosynthesis; L-threonine from L-aspartate: step 4/5. In terms of biological role, catalyzes the ATP-dependent phosphorylation of L-homoserine to L-homoserine phosphate. The protein is Homoserine kinase of Listeria monocytogenes serovar 1/2a (strain ATCC BAA-679 / EGD-e).